We begin with the raw amino-acid sequence, 157 residues long: Protein GrpE (157 aa).

Over residues 1-10 the composition is skewed to basic and acidic residues; the sequence is MQEENQHPEQ. Positions 1–21 are disordered; that stretch reads MQEENQHPEQDDISEAQDAGA.

The protein belongs to the GrpE family. In terms of assembly, homodimer.

It localises to the cytoplasm. Participates actively in the response to hyperosmotic and heat shock by preventing the aggregation of stress-denatured proteins, in association with DnaK and GrpE. It is the nucleotide exchange factor for DnaK and may function as a thermosensor. Unfolded proteins bind initially to DnaJ; upon interaction with the DnaJ-bound protein, DnaK hydrolyzes its bound ATP, resulting in the formation of a stable complex. GrpE releases ADP from DnaK; ATP binding to DnaK triggers the release of the substrate protein, thus completing the reaction cycle. Several rounds of ATP-dependent interactions between DnaJ, DnaK and GrpE are required for fully efficient folding. The polypeptide is Protein GrpE (Methylovorus sp. (strain SS1 / DSM 11726)).